The chain runs to 282 residues: Protoheme IX farnesyltransferase (282 aa).

A run of 9 helical transmembrane segments spans residues 13-33 (VAGMVALSCVFGYLLAAGAAG), 36-56 (MVTSAAGTFLLTCACSVFNQI), 74-96 (ASGRLPTTAARAVGMAALLPALI), 101-120 (AGGVRLVLLSAAVLALYNGV), 129-149 (AFSLLAGAVPGALPPVFGWLA), 156-176 (SPEIALLFIVYYLWQVPHFWL), 207-227 (LWYASYMVALLLLPVFPFIAE), 232-252 (IAVCLAGITGLAASGYLLASP), and 261-281 (VSMLFVMLLLVVDRLVTSGII).

It belongs to the UbiA prenyltransferase family. Protoheme IX farnesyltransferase subfamily.

The protein resides in the cell inner membrane. The catalysed reaction is heme b + (2E,6E)-farnesyl diphosphate + H2O = Fe(II)-heme o + diphosphate. It participates in porphyrin-containing compound metabolism; heme O biosynthesis; heme O from protoheme: step 1/1. Converts heme B (protoheme IX) to heme O by substitution of the vinyl group on carbon 2 of heme B porphyrin ring with a hydroxyethyl farnesyl side group. The polypeptide is Protoheme IX farnesyltransferase (Oleidesulfovibrio alaskensis (strain ATCC BAA-1058 / DSM 17464 / G20) (Desulfovibrio alaskensis)).